Consider the following 128-residue polypeptide: UPF0325 protein KPN78578_01770 (128 aa).

Belongs to the UPF0325 family.

The sequence is that of UPF0325 protein KPN78578_01770 from Klebsiella pneumoniae subsp. pneumoniae (strain ATCC 700721 / MGH 78578).